Here is a 196-residue protein sequence, read N- to C-terminus: Peptide methionine sulfoxide reductase MsrA 2 (196 aa).

Cysteine 36 is an active-site residue.

Belongs to the MsrA Met sulfoxide reductase family.

It catalyses the reaction L-methionyl-[protein] + [thioredoxin]-disulfide + H2O = L-methionyl-(S)-S-oxide-[protein] + [thioredoxin]-dithiol. It carries out the reaction [thioredoxin]-disulfide + L-methionine + H2O = L-methionine (S)-S-oxide + [thioredoxin]-dithiol. In terms of biological role, has an important function as a repair enzyme for proteins that have been inactivated by oxidation. Catalyzes the reversible oxidation-reduction of methionine sulfoxide in proteins to methionine. This is Peptide methionine sulfoxide reductase MsrA 2 (msrA2) from Caulobacter vibrioides (strain ATCC 19089 / CIP 103742 / CB 15) (Caulobacter crescentus).